A 400-amino-acid chain; its full sequence is MAKEKFVRTKPHVNVGTIGHIDHGKSTLTAAITKYLSLKGLAQYVPYDQIDKAPEEKARGITINITHVEYETEKRHYAHIDCPGHADYIKNMITGAAQMDGAILVVAATDGPMPQTREHVLLARQVEVPYMIVFINKTDMVDDPELIELVEMEVRDLLSQYEYPGDEVPVIKGSALKALEAPDDPNHEAYKPIQELLDAMDNYIPDPQRDVDKPFLMPIEDVFSITGRGTVVTGRIERGRIRPGDEVEIIGLSYEIRKTVVTSVEMFRKELDEGIAGDNVGCLLRGIDKDEVERGQVLAAPGSIKPHKRFKAEVYVLKKEEGGRHTPFTKGYKPQFYIRTADVTGEIVGLPEGVEMVMPGDHVEMEIELIYPVAIEKGQRFAIREGGRTVGAGVVTEVIE.

The 199-residue stretch at 10–208 (KPHVNVGTIG…AMDNYIPDPQ (199 aa)) folds into the tr-type G domain. Residues 19–26 (GHIDHGKS) form a G1 region. A GTP-binding site is contributed by 19 to 26 (GHIDHGKS). Ser-26 serves as a coordination point for Mg(2+). Residues 60–64 (GITIN) are G2. The segment at 81-84 (DCPG) is G3. Residues 81-85 (DCPGH) and 136-139 (NKTD) contribute to the GTP site. The interval 136 to 139 (NKTD) is G4. The interval 174–176 (SAL) is G5.

This sequence belongs to the TRAFAC class translation factor GTPase superfamily. Classic translation factor GTPase family. EF-Tu/EF-1A subfamily. Monomer.

It localises to the cytoplasm. It catalyses the reaction GTP + H2O = GDP + phosphate + H(+). In terms of biological role, GTP hydrolase that promotes the GTP-dependent binding of aminoacyl-tRNA to the A-site of ribosomes during protein biosynthesis. The chain is Elongation factor Tu from Thermotoga neapolitana (strain ATCC 49049 / DSM 4359 / NBRC 107923 / NS-E).